The chain runs to 1429 residues: Protein lin-12 (1429 aa).

The first 15 residues, 1–15 (MRIPTICFLFLLISL), serve as a signal peptide directing secretion. The Extracellular portion of the chain corresponds to 16 to 908 (SKSLHIGSCL…GNNTGFLSWN (893 aa)). EGF-like domains are found at residues 20-61 (HIGS…EYCE) and 114-150 (TQGW…ERCE). 9 disulfides stabilise this stretch: C24-C35, C29-C49, C51-C60, C118-C129, C123-C138, C140-C149, C156-C169, C163-C178, and C180-C189. N41 is a glycosylation site (N-linked (GlcNAc...) asparagine). Residues 152 to 190 (DVNECEENKNACGNRSTCMNTLGTYICVCPQGFLPPDCL) enclose the EGF-like 3; calcium-binding domain. N165 is a glycosylation site (N-linked (GlcNAc...) asparagine). Residue N194 is glycosylated (N-linked (GlcNAc...) asparagine). EGF-like domains follow at residues 201–246 (KQPV…STCE), 250–285 (KEDS…SYCQ), 287–323 (GKDN…PYCE), and 323–363 (EKMD…ILCE). Disulfide bonds link C205–C227, C221–C234, C236–C245, C254–C264, C259–C273, C275–C284, C291–C302, C296–C311, C313–C322, C327–C339, C334–C351, C353–C362, C369–C381, C375–C390, C392–C401, C408–C419, C413–C429, C431–C440, C462–C475, C469–C480, C482–C491, C507–C518, C512–C529, C531–C540, C547–C558, C552–C567, C569–C578, C586–C597, C591–C607, and C609–C618. The region spanning 365–402 (DKNECLSENMCLNNGTCVNLPGSFRCDCARGFGGKWCD) is the EGF-like 8; calcium-binding domain. N378 is a glycosylation site (N-linked (GlcNAc...) asparagine). EGF-like domains follow at residues 404 to 441 (PLNM…KRCE), 449 to 492 (GGVR…NQCE), 503 to 541 (SENL…DICE), 543 to 579 (HKDL…NGCE), and 582 to 619 (KMFR…ARCE). N-linked (GlcNAc...) asparagine glycosylation is present at N515. A glycan (N-linked (GlcNAc...) asparagine) is linked at N623. 9 disulfide bridges follow: C638-C661, C643-C656, C652-C668, C678-C702, C684-C697, C693-C709, C716-C742, C724-C737, and C733-C749. LNR repeat units lie at residues 638-674 (CEKR…KREP), 678-709 (CRYG…GMDC), and 716-754 (CPVK…NETN). 3 N-linked (GlcNAc...) asparagine glycosylation sites follow: N751, N754, and N900. A helical membrane pass occupies residues 909-931 (ALLLIGAGCLIVMVVLMLGALPG). At 932–1429 (NRTRKRRMIN…TRYSEPAHYF (498 aa)) the chain is on the cytoplasmic side. The RAM domain stretch occupies residues 933–952 (RTRKRRMINASVWMPPMENE). ANK repeat units follow at residues 1093-1122 (DENT…DPTI), 1126-1158 (SERS…DIEE), 1162-1194 (NGMT…KVDY), 1206-1236 (KGRT…NKDK), and 1240-1269 (DGKT…SVEA). The disordered stretch occupies residues 1308–1374 (IQHTHQPQPS…TTHTTPTSLN (67 aa)). Positions 1319-1330 (KVTRAPKKQTSR) are enriched in basic residues. The segment covering 1361–1374 (HFMNTTHTTPTSLN) has biased composition (polar residues).

The protein belongs to the NOTCH family. As to quaternary structure, may interact with dsl-1. May interact with lag-2. May interact with osm-11. Interacts with sel-10. When activated, the lin-12/Notch intracellular domain (NICD) can become a component of a complex consisting of at least the NICD, lag-1 and sel-8/lag-3. The NICD probably facilitates ordered assembly of the ternary complex via allosteric interactions of its RBP-j associated molecule (RAM) domain with lag-1. Upon binding its ligands, it is cleaved (S2 cleavage) in its extracellular domain, close to the transmembrane domain. S2 cleavage is probably mediated by the metalloproteases adm-4 and sup-17. It is then cleaved (S3 cleavage) downstream of its transmembrane domain, releasing it from the cell membrane; S3 cleavage requires a multiprotein gamma-secretase complex, which may include presenilin sel-12.

The protein resides in the apical cell membrane. The protein localises to the nucleus. Its function is as follows. Essential signaling protein which has a major role in many developmental processes; involved in cell fate decisions that require cell-cell interactions. Probable membrane-bound receptor for putative ligands lag-2, apx-1, dsl-1 and osm-11. Upon ligand activation, and releasing from the cell membrane, the lin-12/Notch intracellular domain (NICD) forms a transcriptional activator complex with lag-1 and lag-3 and regulates expression of various genes. Required for ventral cell fates in the postembryonic mesodermal lineage (M lineage) and in uterine precursor cells. Activity in cell fate decisions and tumorigenesis is negatively regulated by sel-10. Best known for involvement in cell-fate decisions during development, but also plays roles in other events. Regulates recovery from the dauer larval state. Modulates chemosensory avoidance of octanol and quiescence during molting. Promotes basement membrane mobility during tissue remodeling. Involved in establishing left-right asymmetry during intestinal organogenesis. The polypeptide is Protein lin-12 (Caenorhabditis elegans).